Reading from the N-terminus, the 277-residue chain is Formamidopyrimidine-DNA glycosylase (277 aa).

Pro-2 (schiff-base intermediate with DNA) is an active-site residue. Catalysis depends on Glu-3, which acts as the Proton donor. Residue Lys-59 is the Proton donor; for beta-elimination activity of the active site. DNA contacts are provided by His-96, Arg-115, and Arg-158. The FPG-type zinc-finger motif lies at 243 to 277 (WVYGRGGNPCRRCGGEILREKRAGRSTHFCPRCQK). Arg-267 acts as the Proton donor; for delta-elimination activity in catalysis.

This sequence belongs to the FPG family. Monomer. Zn(2+) serves as cofactor.

The enzyme catalyses Hydrolysis of DNA containing ring-opened 7-methylguanine residues, releasing 2,6-diamino-4-hydroxy-5-(N-methyl)formamidopyrimidine.. It catalyses the reaction 2'-deoxyribonucleotide-(2'-deoxyribose 5'-phosphate)-2'-deoxyribonucleotide-DNA = a 3'-end 2'-deoxyribonucleotide-(2,3-dehydro-2,3-deoxyribose 5'-phosphate)-DNA + a 5'-end 5'-phospho-2'-deoxyribonucleoside-DNA + H(+). Functionally, involved in base excision repair of DNA damaged by oxidation or by mutagenic agents. Acts as a DNA glycosylase that recognizes and removes damaged bases. Has a preference for oxidized purines, such as 7,8-dihydro-8-oxoguanine (8-oxoG). Has AP (apurinic/apyrimidinic) lyase activity and introduces nicks in the DNA strand. Cleaves the DNA backbone by beta-delta elimination to generate a single-strand break at the site of the removed base with both 3'- and 5'-phosphates. This is Formamidopyrimidine-DNA glycosylase from Heliobacterium modesticaldum (strain ATCC 51547 / Ice1).